The sequence spans 332 residues: CAX-interacting protein 4 (332 aa).

A disordered region spans residues 33–59 (GYDPYAPTSKEEPKTTQQKTEDPENSY). Positions 41–54 (SKEEPKTTQQKTED) are enriched in basic and acidic residues. Residues 81 to 98 (GSCKKCGRVGHLTFQCRN) form a CCHC-type zinc finger. Basic and acidic residues predominate over residues 124–133 (IRRGVGKGEV). The disordered stretch occupies residues 124 to 332 (IRRGVGKGEV…RKRHHRKERE (209 aa)). A compositionally biased stretch (acidic residues) spans 134 to 153 (EEVSSEEEEESESSDSDVDS). The span at 154-163 (EMERIIAERF) shows a compositional bias: basic and acidic residues. Composition is skewed to basic residues over residues 198 to 214 (RKRRRRSMKKRSSHKRR) and 227 to 236 (SKRRKERRGR). Positions 241–250 (DDSDESEDED) are enriched in acidic residues. Basic residues-rich tracts occupy residues 254–269 (VKRKSRKEKRRRRSRR) and 314–332 (SSKRSEKKSRKRHHRKERE).

Interacts with CAX1. In terms of tissue distribution, expressed in leaves, stems and roots, and at lower levels in flowers.

It localises to the nucleus. Its function is as follows. May regulate CAX1 cation transporter. In Arabidopsis thaliana (Mouse-ear cress), this protein is CAX-interacting protein 4 (CXIP4).